We begin with the raw amino-acid sequence, 39 residues long: Potassium channel toxin alpha-KTx 2.18 (39 aa).

3 disulfide bridges follow: Cys-7–Cys-29, Cys-13–Cys-34, and Cys-17–Cys-36. An Isoleucine amide modification is found at Ile-39.

It belongs to the short scorpion toxin superfamily. Potassium channel inhibitor family. Alpha-KTx 02 subfamily. In terms of tissue distribution, expressed by the venom gland.

The protein localises to the secreted. In terms of biological role, weakly blocks Kv1.3/KCNA3 voltage-gated potassium channels. This chain is Potassium channel toxin alpha-KTx 2.18, found in Centruroides limpidus (Mexican scorpion).